We begin with the raw amino-acid sequence, 304 residues long: MAATLRELRGRIRSAGSIKKITKAQELIATSRIARAQARLESARPYADQITQMLTTLAADAALDHPLLVEHPQPKRAGVLVVSSDRGLCGAYNANVFRRSEELFSLLRDEGKQPVLYVVGRKALAYYTFRNWYIAQSWTGFSEQPKYENAAEIASTLVDAFMLGAGEGEDLQTNNEQSVDELHIVFTEFKSMLSQSTEARRMAPMVVEYVEETGPRTLYSFEPDATTLFESFLPRYLTTRVYAAMLESAASELASRQRAMKSATDNADDLIKALTLMANRERQAQITQEISEIVGGANALADAR.

This sequence belongs to the ATPase gamma chain family. As to quaternary structure, F-type ATPases have 2 components, CF(1) - the catalytic core - and CF(0) - the membrane proton channel. CF(1) has five subunits: alpha(3), beta(3), gamma(1), delta(1), epsilon(1). CF(0) has three main subunits: a, b and c.

It is found in the cell membrane. Produces ATP from ADP in the presence of a proton gradient across the membrane. The gamma chain is believed to be important in regulating ATPase activity and the flow of protons through the CF(0) complex. This Mycobacterium ulcerans (strain Agy99) protein is ATP synthase gamma chain.